Consider the following 213-residue polypeptide: Ras-related protein Rab-25 (213 aa).

Residues serine 21, glycine 24, lysine 25, threonine 26, asparagine 27, serine 38, histidine 39, threonine 43, and threonine 44 each coordinate GTP. Threonine 26 contributes to the Mg(2+) binding site. 2 consecutive short sequence motifs (switch) follow at residues 35-49 (NEFS…GVEF) and 67-84 (DTAG…YYRG). Mg(2+)-binding residues include threonine 44 and aspartate 67. Glycine 70, asparagine 125, lysine 126, aspartate 128, alanine 156, and leucine 157 together coordinate GTP. 2 S-geranylgeranyl cysteine lipidation sites follow: cysteine 209 and cysteine 210. The residue at position 210 (cysteine 210) is a Cysteine methyl ester. Positions 211–213 (ISL) are cleaved as a propeptide — removed in mature form.

The protein belongs to the small GTPase superfamily. Rab family. Interacts (GTP-bound form) with RAB11FIP1, RAB11FIP2, RAB11FIP3 and RAB11FIP4. Interacts (via the hypervariable C-terminal region) with ITGB1 (via the cytoplasmic region); the interaction is GTP-dependent. Interacts with ITGAV. Associates with the integrin alpha-V/beta-1 heterodimer. Interacts with VPS33B. Requires Mg(2+) as cofactor. As to expression, expression is restricted to epithelial cells. Expressed in ovarian epithelium (NOE) and breast tissue. Expressed in ovarian cancer; expression is increased relative to NOE cells. Expression in ovarian cancer is stage dependent, with stage III and stage IV showing higher levels than early stage cancers. Expressed in breast cancer; expression is increased relative to normal breast tissue.

Its subcellular location is the cell membrane. It is found in the cytoplasmic vesicle. The protein localises to the cell projection. It localises to the pseudopodium membrane. The catalysed reaction is GTP + H2O = GDP + phosphate + H(+). Its activity is regulated as follows. Regulated by guanine nucleotide exchange factors (GEFs) which promote the exchange of bound GDP for free GTP. Regulated by GTPase activating proteins (GAPs) which increase the GTP hydrolysis activity. Inhibited by GDP dissociation inhibitors (GDIs) which prevent Rab-GDP dissociation. Its function is as follows. The small GTPases Rab are key regulators of intracellular membrane trafficking, from the formation of transport vesicles to their fusion with membranes. Rabs cycle between an inactive GDP-bound form and an active GTP-bound form that is able to recruit to membranes different set of downstream effectors directly responsible for vesicle formation, movement, tethering and fusion. RAB25 regulates epithelial cell differentiation, proliferation and survival, thereby playing key roles in tumorigenesis. Promotes invasive migration of cells in which it functions to localize and maintain integrin alpha-V/beta-1 at the tips of extending pseudopodia. Involved in the regulation of epithelial morphogenesis through the control of CLDN4 expression and localization at tight junctions. May selectively regulate the apical recycling pathway. Together with MYO5B regulates transcytosis. This is Ras-related protein Rab-25 from Homo sapiens (Human).